The sequence spans 227 residues: Cytochrome c oxidase subunit 2 (227 aa).

Residues 1-14 (MAYPHQLGFQDATS) lie on the Mitochondrial intermembrane side of the membrane. Residues 15–45 (PIMEELLSFHDHTLMIVFLISSLVLYLISLM) form a helical membrane-spanning segment. Residues 46-59 (LTTKLTHTSTMDAQ) lie on the Mitochondrial matrix side of the membrane. The helical transmembrane segment at 60–87 (EVETVWTILPAIILIMIALPSLRILYMM) threads the bilayer. Residues 88 to 227 (DEINNPLLTV…SFENWTTSMT (140 aa)) lie on the Mitochondrial intermembrane side of the membrane. Positions 161, 196, 198, 200, 204, and 207 each coordinate Cu cation. Mg(2+) is bound at residue glutamate 198.

The protein belongs to the cytochrome c oxidase subunit 2 family. As to quaternary structure, component of the cytochrome c oxidase (complex IV, CIV), a multisubunit enzyme composed of 14 subunits. The complex is composed of a catalytic core of 3 subunits MT-CO1, MT-CO2 and MT-CO3, encoded in the mitochondrial DNA, and 11 supernumerary subunits COX4I, COX5A, COX5B, COX6A, COX6B, COX6C, COX7A, COX7B, COX7C, COX8 and NDUFA4, which are encoded in the nuclear genome. The complex exists as a monomer or a dimer and forms supercomplexes (SCs) in the inner mitochondrial membrane with NADH-ubiquinone oxidoreductase (complex I, CI) and ubiquinol-cytochrome c oxidoreductase (cytochrome b-c1 complex, complex III, CIII), resulting in different assemblies (supercomplex SCI(1)III(2)IV(1) and megacomplex MCI(2)III(2)IV(2)). Found in a complex with TMEM177, COA6, COX18, COX20, SCO1 and SCO2. Interacts with TMEM177 in a COX20-dependent manner. Interacts with COX20. Interacts with COX16. Cu cation serves as cofactor.

It localises to the mitochondrion inner membrane. It catalyses the reaction 4 Fe(II)-[cytochrome c] + O2 + 8 H(+)(in) = 4 Fe(III)-[cytochrome c] + 2 H2O + 4 H(+)(out). Functionally, component of the cytochrome c oxidase, the last enzyme in the mitochondrial electron transport chain which drives oxidative phosphorylation. The respiratory chain contains 3 multisubunit complexes succinate dehydrogenase (complex II, CII), ubiquinol-cytochrome c oxidoreductase (cytochrome b-c1 complex, complex III, CIII) and cytochrome c oxidase (complex IV, CIV), that cooperate to transfer electrons derived from NADH and succinate to molecular oxygen, creating an electrochemical gradient over the inner membrane that drives transmembrane transport and the ATP synthase. Cytochrome c oxidase is the component of the respiratory chain that catalyzes the reduction of oxygen to water. Electrons originating from reduced cytochrome c in the intermembrane space (IMS) are transferred via the dinuclear copper A center (CU(A)) of subunit 2 and heme A of subunit 1 to the active site in subunit 1, a binuclear center (BNC) formed by heme A3 and copper B (CU(B)). The BNC reduces molecular oxygen to 2 water molecules using 4 electrons from cytochrome c in the IMS and 4 protons from the mitochondrial matrix. The protein is Cytochrome c oxidase subunit 2 (MT-CO2) of Georychus capensis (Cape mole rat).